The primary structure comprises 103 residues: Large ribosomal subunit protein eL30 (103 aa).

Belongs to the eukaryotic ribosomal protein eL30 family.

The protein is Large ribosomal subunit protein eL30 of Methanosarcina mazei (strain ATCC BAA-159 / DSM 3647 / Goe1 / Go1 / JCM 11833 / OCM 88) (Methanosarcina frisia).